The following is a 272-amino-acid chain: Orotidine 5'-phosphate decarboxylase (272 aa).

Catalysis depends on K95, which acts as the Proton donor.

The protein belongs to the OMP decarboxylase family. Type 2 subfamily.

It carries out the reaction orotidine 5'-phosphate + H(+) = UMP + CO2. It participates in pyrimidine metabolism; UMP biosynthesis via de novo pathway; UMP from orotate: step 2/2. In Cupriavidus taiwanensis (strain DSM 17343 / BCRC 17206 / CCUG 44338 / CIP 107171 / LMG 19424 / R1) (Ralstonia taiwanensis (strain LMG 19424)), this protein is Orotidine 5'-phosphate decarboxylase.